The chain runs to 634 residues: Replication protein E1 (634 aa).

Residues 85–87 (KRK) carry the Nuclear localization signal motif. Phosphoserine; by host occurs at positions 91 and 95. The disordered stretch occupies residues 92 to 117 (PRSSPLGDITNQNNTHSHSQANESQV). Polar residues predominate over residues 100 to 115 (ITNQNNTHSHSQANES). Positions 172-338 (CANVELNSIC…QTQLQHSFED (167 aa)) are DNA-binding region. The region spanning 437–587 (VNFMSFIQMF…FPFDNNGNAV (151 aa)) is the SF3 helicase domain. 463-470 (GPPNTGKS) is a binding site for ATP.

It belongs to the papillomaviridae E1 protein family. As to quaternary structure, can form hexamers. Interacts with E2 protein; this interaction increases E1 DNA binding specificity. Interacts with host DNA polymerase subunit POLA2. Interacts with host single stranded DNA-binding protein RPA1. Interacts with host TOP1; this interaction stimulates the enzymatic activity of TOP1. In terms of processing, phosphorylated.

It is found in the host nucleus. It carries out the reaction Couples ATP hydrolysis with the unwinding of duplex DNA by translocating in the 3'-5' direction.. It catalyses the reaction ATP + H2O = ADP + phosphate + H(+). ATP-dependent DNA 3'-5' helicase required for initiation of viral DNA replication. It forms a complex with the viral E2 protein. The E1-E2 complex binds to the replication origin which contains binding sites for both proteins. During the initial step, a dimer of E1 interacts with a dimer of protein E2 leading to a complex that binds the viral origin of replication with high specificity. Then, a second dimer of E1 displaces the E2 dimer in an ATP-dependent manner to form the E1 tetramer. Following this, two E1 monomers are added to each half of the site, which results in the formation of two E1 trimers on the viral ori. Subsequently, two hexamers will be created. The double hexamer acts as a bi-directional helicase machinery and unwinds the viral DNA and then recruits the host DNA polymerase to start replication. The protein is Replication protein E1 of Homo sapiens (Human).